A 356-amino-acid chain; its full sequence is Protein HEXIM1 (356 aa).

Composition is skewed to basic and acidic residues over residues 1–11 and 24–47; these read MAEPLLTEHQH and VHEEHTSERPPSAEERVPKEDSRW. Residues 1 to 162 form a disordered region; the sequence is MAEPLLTEHQ…RPSKKKRHWK (162 aa). The span at 48-58 shows a compositional bias: polar residues; sequence QSRASLQSGSR. Over residues 84–93 the composition is skewed to basic and acidic residues; that stretch reads SLEKGEKGQN. Phosphoserine is present on residues serine 98 and serine 103. The segment covering 145–162 has biased composition (basic residues); that stretch reads LGKKKHRRRPSKKKRHWK. Positions 147 to 174 are basic region; mediates nuclear localization and interaction with 7SK snRNA and NR3C1; that stretch reads KKKHRRRPSKKKRHWKPYYKLTWEEKKK. Residues 199–202 are interaction with P-TEFb; that stretch reads PYNT. Positions 207–247 are autoinhibitory acidic region; in absence of 7SK snRNA interacts with the basic region preventing interaction with P-TEFb and modulating subcellular localization; it reads MDDHDQEEPDLKTGLYPKRAAAKSDDTSDEDFVEEAGEEDG. The interval 210 to 259 is disordered; that stretch reads HDQEEPDLKTGLYPKRAAAKSDDTSDEDFVEEAGEEDGGSDGMGGDGSEF. Position 230 is a phosphoserine (serine 230). Threonine 233 is modified (phosphothreonine). Residues 233 to 248 show a composition bias toward acidic residues; sequence TSDEDFVEEAGEEDGG. Phosphoserine is present on residues serine 234, serine 249, and serine 257. A coiled-coil region spans residues 280-346; it reads SKQELIKEYL…LTENELHRQQ (67 aa). Residues 283-311 are mediates interaction with CCNT1; that stretch reads ELIKEYLELEKCLSRKEDENNRLRLESKR. The required for inhibition of ESR1-dependent transcription stretch occupies residues 307-352; it reads LESKRLGGVDARVRELELELDRLRAENLQLLTENELHRQQERAPLS.

Belongs to the HEXIM family. In terms of assembly, homooligomer and heterooligomer with HEXIM2; probably dimeric. Core component of the 7SK RNP complex, at least composed of 7SK RNA, LARP7, MEPCE, HEXIM1 (or HEXIM2) and P-TEFb (composed of CDK9 and CCNT1/cyclin-T1). Interacts with the N-CoR complex through NCOR1. Interacts with ESR1 and NR3C1. May interact with NF-kappa-B through RELA. Interacts with CCNT2; mediates formation of a tripartite complex with KPNA2. Part of the HDP-RNP complex composed of at least HEXIM1, PRKDC, XRCC5, XRCC6, paraspeckle proteins (SFPQ, NONO, PSPC1, RBM14, and MATR3) and NEAT1 non-coding RNA. In terms of tissue distribution, widely expressed with higher expression in heart, skeletal muscle and brain (at protein level).

It is found in the nucleus. It localises to the cytoplasm. Functionally, transcriptional regulator which functions as a general RNA polymerase II transcription inhibitor. Core component of the 7SK RNP complex: in cooperation with 7SK snRNA sequesters P-TEFb in a large inactive 7SK snRNP complex preventing RNA polymerase II phosphorylation and subsequent transcriptional elongation. May also regulate NF-kappa-B, ESR1, NR3C1 and CIITA-dependent transcriptional activity. Plays a role in the regulation of DNA virus-mediated innate immune response by assembling into the HDP-RNP complex, a complex that serves as a platform for IRF3 phosphorylation and subsequent innate immune response activation through the cGAS-STING pathway. This Mus musculus (Mouse) protein is Protein HEXIM1 (Hexim1).